The sequence spans 138 residues: Small ribosomal subunit protein uS12 (138 aa).

Residue aspartate 89 is modified to 3-methylthioaspartic acid. Positions 107 to 138 (VSGRMQRRSKYGAKFPKTGTGKTKAVPTKNKK) are disordered.

This sequence belongs to the universal ribosomal protein uS12 family. In terms of assembly, part of the 30S ribosomal subunit. Contacts proteins S8 and S17. May interact with IF1 in the 30S initiation complex.

Functionally, with S4 and S5 plays an important role in translational accuracy. In terms of biological role, interacts with and stabilizes bases of the 16S rRNA that are involved in tRNA selection in the A site and with the mRNA backbone. Located at the interface of the 30S and 50S subunits, it traverses the body of the 30S subunit contacting proteins on the other side and probably holding the rRNA structure together. The combined cluster of proteins S8, S12 and S17 appears to hold together the shoulder and platform of the 30S subunit. The sequence is that of Small ribosomal subunit protein uS12 from Azobacteroides pseudotrichonymphae genomovar. CFP2.